Here is a 392-residue protein sequence, read N- to C-terminus: 8-amino-7-oxononanoate synthase (392 aa).

R18 serves as a coordination point for substrate. Residue 105–106 (GY) participates in pyridoxal 5'-phosphate binding. Residue H130 participates in substrate binding. The pyridoxal 5'-phosphate site is built by S177, H205, and T234. N6-(pyridoxal phosphate)lysine is present on K237. Substrate is bound at residue T351.

It belongs to the class-II pyridoxal-phosphate-dependent aminotransferase family. BioF subfamily. As to quaternary structure, homodimer. Pyridoxal 5'-phosphate is required as a cofactor.

It catalyses the reaction 6-carboxyhexanoyl-[ACP] + L-alanine + H(+) = (8S)-8-amino-7-oxononanoate + holo-[ACP] + CO2. It participates in cofactor biosynthesis; biotin biosynthesis. In terms of biological role, catalyzes the decarboxylative condensation of pimeloyl-[acyl-carrier protein] and L-alanine to produce 8-amino-7-oxononanoate (AON), [acyl-carrier protein], and carbon dioxide. The chain is 8-amino-7-oxononanoate synthase from Thioalkalivibrio sulfidiphilus (strain HL-EbGR7).